A 376-amino-acid polypeptide reads, in one-letter code: Putative 12-oxophytodienoate reductase 13 (376 aa).

Residues 25–27 (PLT), Ala-58, and Gln-99 each bind FMN. 165 to 168 (HGAH) contacts substrate. FMN is bound by residues Arg-217, Gly-301, and 322–323 (GR).

This sequence belongs to the NADH:flavin oxidoreductase/NADH oxidase family. FMN is required as a cofactor.

In terms of biological role, putative oxophytodienoate reductase that may be involved in the biosynthesis or metabolism of oxylipin signaling molecules. The polypeptide is Putative 12-oxophytodienoate reductase 13 (OPR13) (Oryza sativa subsp. japonica (Rice)).